The sequence spans 394 residues: MDSQGKKVVVCDNGTGFVKCGYAGSNFPEHIFPALVGRPIIRSTAKVGNIEIKDLMVGDEASELRSMLEVNYPMENGIVRNWDDMKHLWDYTFGPEKLNIDSRNCKILLTEPPMNPTKNREKIIEVMFETYQFSGVYIAIQAVLTLYAQGLLTGVVVDSGDGVTHICPVYEGFSLPHLTRRLDIAGRDITRYLIKLLLLRGYAFNHSADFETVRMMKEKLCYVGYNIEQEQKLALETTVLVESYTLPDGRVIKVGGERFGAPEALFQPHLINVEGVGVAELLFNTIQAADIDTRAEFYKHIVLSGGSTMYPGLPSRLERELKQLYLERVLKGDVDKLSKFKIRIEDPPRRKHMVFLGGAVLADIMKDKDNFWMTREEYQEKGTRVLEKLGVTVR.

ATP contacts are provided by residues 160–162 (GDG), 214–218 (RMMKE), and 305–310 (GGSTMY).

The protein belongs to the actin family. ARP2 subfamily. As to quaternary structure, component of the Arp2/3 complex composed of actr2/arp2, actr3/arp3, arpc1b, arpc2, arpc3, arpc4 and arpc5.

It is found in the cytoplasm. The protein resides in the cytoskeleton. It localises to the cell projection. The protein localises to the nucleus. In terms of biological role, ATP-binding component of the Arp2/3 complex, a multiprotein complex that mediates actin polymerization upon stimulation by nucleation-promoting factor (NPF). The Arp2/3 complex mediates the formation of branched actin networks in the cytoplasm, providing the force for cell motility. Seems to contact the pointed end of the daughter actin filament. In addition to its role in the cytoplasmic cytoskeleton, the Arp2/3 complex also promotes actin polymerization in the nucleus, thereby regulating gene transcription and repair of damaged DNA. The Arp2/3 complex promotes homologous recombination (HR) repair in response to DNA damage by promoting nuclear actin polymerization, leading to drive motility of double-strand breaks (DSBs). This is Actin-related protein 2-A (actr2a) from Danio rerio (Zebrafish).